We begin with the raw amino-acid sequence, 196 residues long: Putative NADH dehydrogenase/NAD(P)H nitroreductase Reut_A1586 (196 aa).

This sequence belongs to the nitroreductase family. HadB/RutE subfamily. The cofactor is FMN.

This is Putative NADH dehydrogenase/NAD(P)H nitroreductase Reut_A1586 from Cupriavidus pinatubonensis (strain JMP 134 / LMG 1197) (Cupriavidus necator (strain JMP 134)).